A 418-amino-acid chain; its full sequence is Nucleoside permease NupC (418 aa).

Helical transmembrane passes span 2 to 22 (IFSS…AWVF), 34 to 54 (IVSA…VPLG), 93 to 113 (IGGF…ASLI), 174 to 194 (IFAV…AGYA), 198 to 218 (IPLP…LLFA), 264 to 284 (LLAF…VGGF), 292 to 314 (LGLI…WSQA), 354 to 374 (AIIT…MLIG), and 395 to 415 (VLVG…FIGL).

Belongs to the concentrative nucleoside transporter (CNT) (TC 2.A.41) family.

Its subcellular location is the cell inner membrane. Its function is as follows. Involved in purine nucleosides uptake. Could also be involved in uptake of nucleobases. The sequence is that of Nucleoside permease NupC from Helicobacter pylori (strain ATCC 700392 / 26695) (Campylobacter pylori).